A 387-amino-acid polypeptide reads, in one-letter code: 3-ketoacyl-CoA thiolase (387 aa).

Cys-91 functions as the Acyl-thioester intermediate in the catalytic mechanism. Residues His-343 and Cys-373 each act as proton acceptor in the active site.

The protein belongs to the thiolase-like superfamily. Thiolase family. Heterotetramer of two alpha chains (FadB) and two beta chains (FadA).

The protein localises to the cytoplasm. It carries out the reaction an acyl-CoA + acetyl-CoA = a 3-oxoacyl-CoA + CoA. It functions in the pathway lipid metabolism; fatty acid beta-oxidation. Functionally, catalyzes the final step of fatty acid oxidation in which acetyl-CoA is released and the CoA ester of a fatty acid two carbons shorter is formed. This Shewanella sp. (strain MR-7) protein is 3-ketoacyl-CoA thiolase.